The sequence spans 264 residues: MNRHHDPNPFDEDEEIVNPFSKGGGRVPAASRPVEYGQSLDATVDIPLDNMNDSSQKQRKLADWEAELRKKEMDIKRREEAIAKFGVQIDDKNWPPFFPIIHHDIAKEIPVHAQKLQYLAFASWLGIVLCLVFNVIATMVCWIKGGGVKIFFLATIYALIGCPLSYVLWYRPLYRAMRTDSALKFGWFFFTYLIHIGFCIVAAIAPPIFFHGKSLTGVLAAIDVISDSLLAGIFYFIGFGLFCLESLLSLWVLQKIYLYFRGNK.

Residues 1–33 are disordered; the sequence is MNRHHDPNPFDEDEEIVNPFSKGGGRVPAASRP. The Cytoplasmic segment spans residues 1–122; that stretch reads MNRHHDPNPF…AQKLQYLAFA (122 aa). Residues 51-85 are a coiled coil; sequence MNDSSQKQRKLADWEAELRKKEMDIKRREEAIAKF. 4 consecutive transmembrane segments (helical) span residues 123 to 143, 150 to 170, 185 to 205, and 233 to 253; these read SWLG…VCWI, IFFL…VLWY, FGWF…AAIA, and IFYF…LWVL. Topologically, residues 254-264 are cytoplasmic; it reads QKIYLYFRGNK.

This sequence belongs to the SCAMP family.

It is found in the cell membrane. The protein localises to the cytoplasmic vesicle. The protein resides in the secretory vesicle membrane. Its function is as follows. Probably involved in membrane trafficking. This chain is Secretory carrier-associated membrane protein 4 (SCAMP4), found in Arabidopsis thaliana (Mouse-ear cress).